Consider the following 308-residue polypeptide: Glutaminase (308 aa).

Residues serine 66, asparagine 117, glutamate 161, asparagine 168, tyrosine 192, tyrosine 244, and valine 262 each contribute to the substrate site.

Belongs to the glutaminase family. As to quaternary structure, homotetramer.

It carries out the reaction L-glutamine + H2O = L-glutamate + NH4(+). The protein is Glutaminase of Salmonella dublin (strain CT_02021853).